A 351-amino-acid chain; its full sequence is Serine protease inhibitor dipetalogastin (351 aa).

Residues 1–131 constitute a propeptide that is removed on maturation; it reads LIKELVNMVI…AETTNAMEVL (131 aa). 6 Kazal-like domains span residues 19 to 69, 72 to 122, 131 to 181, 184 to 234, 240 to 289, and 297 to 347; these read KELK…PCDE, HDFE…ECHA, LFQG…PCDE, HDFE…ECHP, QLIL…ECKV, and GEVR…RCLP. Disulfide bonds link cysteine 25/cysteine 50, cysteine 27/cysteine 46, cysteine 35/cysteine 67, cysteine 78/cysteine 103, cysteine 80/cysteine 99, cysteine 88/cysteine 120, cysteine 137/cysteine 162, cysteine 139/cysteine 158, cysteine 147/cysteine 179, cysteine 190/cysteine 215, cysteine 192/cysteine 211, cysteine 200/cysteine 232, cysteine 246/cysteine 271, cysteine 248/cysteine 267, cysteine 256/cysteine 287, cysteine 303/cysteine 328, cysteine 305/cysteine 324, and cysteine 313/cysteine 345.

Its subcellular location is the secreted. In terms of biological role, thrombin inhibitor. Prevents blood clotting to allow insect to feed on blood. Also functions as an inhibitor of trypsin and plasmin. In Dipetalogaster maximus (Blood-sucking bug), this protein is Serine protease inhibitor dipetalogastin.